Here is a 382-residue protein sequence, read N- to C-terminus: MTLRDWMRTFGEARSIDINNDLERGYEAALLIQTLELEYYGDRPIRPNLQLSVPRSLQSTILRKFHTAANICRLTFEAIKPNVSQLDSQEYRKYQLIETIVNRYAPKRSSRSTSISRAPDALPRSLLGLVDKVRRQLDPTSEATLVAGFRRRRDSTLISLKIILLLILVPLLVQQISRTYLITPAIDYLAPELPFLSYPKPQLEEQAVEKLRVFKAEIEFDALLKGDSIPSQDELQKALAIKAIQLKDEADKESTHAIKNVLADLAALIAFAFVCIINREELRVLRGFLDEAIYGLSDSAKAFAIILFTDMFVGFHSPEGWQVLLQGIANHFGFPARENFILLFIATFPVILATIFKYWIFRYLNRVSPSSVATLRGMNGSS.

Transmembrane regions (helical) follow at residues 156–176 (TLIS…VQQI), 257–277 (AIKN…VCII), 305–325 (IILF…QVLL), and 340–360 (FILL…KYWI).

Belongs to the CemA family.

The protein localises to the cell inner membrane. Functionally, required for H(+) efflux immediately after light irradiation to form a rapid H(+) concentration gradient across the thylakoid membranes. Together with PxcL, contributes to transient H(+) uptake following dark to light transition. The protein is Proton extrusion protein PxcA of Prochlorococcus marinus (strain MIT 9313).